A 189-amino-acid chain; its full sequence is Crossover junction endodeoxyribonuclease RuvC (189 aa).

Active-site residues include D7, E68, and D141. Mg(2+) is bound by residues D7, E68, and D141.

Belongs to the RuvC family. Homodimer which binds Holliday junction (HJ) DNA. The HJ becomes 2-fold symmetrical on binding to RuvC with unstacked arms; it has a different conformation from HJ DNA in complex with RuvA. In the full resolvosome a probable DNA-RuvA(4)-RuvB(12)-RuvC(2) complex forms which resolves the HJ. Mg(2+) serves as cofactor.

Its subcellular location is the cytoplasm. The enzyme catalyses Endonucleolytic cleavage at a junction such as a reciprocal single-stranded crossover between two homologous DNA duplexes (Holliday junction).. In terms of biological role, the RuvA-RuvB-RuvC complex processes Holliday junction (HJ) DNA during genetic recombination and DNA repair. Endonuclease that resolves HJ intermediates. Cleaves cruciform DNA by making single-stranded nicks across the HJ at symmetrical positions within the homologous arms, yielding a 5'-phosphate and a 3'-hydroxyl group; requires a central core of homology in the junction. The consensus cleavage sequence is 5'-(A/T)TT(C/G)-3'. Cleavage occurs on the 3'-side of the TT dinucleotide at the point of strand exchange. HJ branch migration catalyzed by RuvA-RuvB allows RuvC to scan DNA until it finds its consensus sequence, where it cleaves and resolves the cruciform DNA. The polypeptide is Crossover junction endodeoxyribonuclease RuvC (Rhodococcus jostii (strain RHA1)).